The following is a 105-amino-acid chain: Zinc metalloproteinase/disintegrin (105 aa).

Positions aspartate 1–proline 3 constitute a Peptidase M12B domain. Positions proline 11–asparagine 96 constitute a Disintegrin domain. 6 disulfide bridges follow: cysteine 25–cysteine 43, cysteine 27–cysteine 38, cysteine 37–cysteine 60, cysteine 51–cysteine 57, cysteine 56–cysteine 82, and cysteine 69–cysteine 89. Residues glutamate 75 to aspartate 77 carry the D/ECD-tripeptide motif. Residues proline 99–glycine 105 constitute a propeptide that is removed on maturation.

It belongs to the venom metalloproteinase (M12B) family. P-III subfamily. Monomer. Zn(2+) serves as cofactor. In terms of tissue distribution, expressed by the venom gland.

It is found in the secreted. Its function is as follows. Impairs hemostasis in the envenomed animal. Inhibits platelet aggregation induced by ADP, thrombin, platelet-activating factor and collagen. Acts by inhibiting fibrinogen interaction with platelet receptors GPIIb/GPIIIa (ITGA2B/ITGB3). This is Zinc metalloproteinase/disintegrin from Gloydius brevicauda (Korean slamosa snake).